The following is a 309-amino-acid chain: Ribosomal protein L11 methyltransferase (309 aa).

Thr-152, Gly-178, Asp-200, and Asn-242 together coordinate S-adenosyl-L-methionine.

It belongs to the methyltransferase superfamily. PrmA family.

The protein resides in the cytoplasm. The enzyme catalyses L-lysyl-[protein] + 3 S-adenosyl-L-methionine = N(6),N(6),N(6)-trimethyl-L-lysyl-[protein] + 3 S-adenosyl-L-homocysteine + 3 H(+). Functionally, methylates ribosomal protein L11. The polypeptide is Ribosomal protein L11 methyltransferase (Pelobacter propionicus (strain DSM 2379 / NBRC 103807 / OttBd1)).